The primary structure comprises 375 residues: MRTRVAELLGAEFPICAFSHCRDVVAAVSNAGGFGILGAVAHSPKRLESELTWIEEHTGGKPYGVDVLLPPKYIGAEQGGIDAQQARELIPEGHRTFVDDLLVRYGIPAVTDRQRSSSAGGLHISPKGYQPLLDVAFAHDIRLIASALGPPPPDLVERAHNHDVLVAALAGTAQHARRHAAAGVDLIVAQGTEAGGHTGEVATMVLVPEVVDAVSPTPVLAAGGIARGRQIAAALALGAEGVWCGSVWLTTEEAETPPVVKDKFLAATSSDTVRSRSLTGKPARMLRTAWTDEWDRPDSPDPLGMPLQSALVSDPQLRINQAAGQPGAKARELATYFVGQVVGSLDRVRSARSVVLDMVEEFIDTVGQLQGLVQR.

FMN-binding positions include glutamine 190, glycine 195, glycine 224, and 243–246 (WCGS).

It belongs to the nitronate monooxygenase family. The cofactor is FMN.

The protein is Putative monooxygenase Rv1533 of Mycobacterium tuberculosis (strain ATCC 25618 / H37Rv).